Here is a 235-residue protein sequence, read N- to C-terminus: Probable transcriptional regulatory protein CFF8240_0424 (235 aa).

The protein belongs to the TACO1 family.

The protein localises to the cytoplasm. The sequence is that of Probable transcriptional regulatory protein CFF8240_0424 from Campylobacter fetus subsp. fetus (strain 82-40).